Consider the following 294-residue polypeptide: Undecaprenyl-diphosphatase (294 aa).

Helical transmembrane passes span Ser2–Leu22, Leu27–Ser47, Val65–Trp85, Leu110–Tyr130, Leu135–Val155, Ile172–Phe192, Phe215–Tyr235, Ile239–Leu259, and Val272–Leu292.

Belongs to the UppP family.

The protein resides in the cell inner membrane. It carries out the reaction di-trans,octa-cis-undecaprenyl diphosphate + H2O = di-trans,octa-cis-undecaprenyl phosphate + phosphate + H(+). In terms of biological role, catalyzes the dephosphorylation of undecaprenyl diphosphate (UPP). Confers resistance to bacitracin. This is Undecaprenyl-diphosphatase from Blochmanniella pennsylvanica (strain BPEN).